Here is a 122-residue protein sequence, read N- to C-terminus: uncharacterized protein (122 aa).

It belongs to the IIV-6 115R family.

This is an uncharacterized protein from Acheta domesticus (House cricket).